The following is a 426-amino-acid chain: Serine--tRNA ligase (426 aa).

An L-serine-binding site is contributed by 231–233 (TLE). An ATP-binding site is contributed by 262-264 (RSE). L-serine is bound at residue Glu285. 349–352 (EISS) is a binding site for ATP. L-serine is bound at residue Ser385.

It belongs to the class-II aminoacyl-tRNA synthetase family. Type-1 seryl-tRNA synthetase subfamily. Homodimer. The tRNA molecule binds across the dimer.

Its subcellular location is the cytoplasm. The enzyme catalyses tRNA(Ser) + L-serine + ATP = L-seryl-tRNA(Ser) + AMP + diphosphate + H(+). The catalysed reaction is tRNA(Sec) + L-serine + ATP = L-seryl-tRNA(Sec) + AMP + diphosphate + H(+). It functions in the pathway aminoacyl-tRNA biosynthesis; selenocysteinyl-tRNA(Sec) biosynthesis; L-seryl-tRNA(Sec) from L-serine and tRNA(Sec): step 1/1. Its function is as follows. Catalyzes the attachment of serine to tRNA(Ser). Is also able to aminoacylate tRNA(Sec) with serine, to form the misacylated tRNA L-seryl-tRNA(Sec), which will be further converted into selenocysteinyl-tRNA(Sec). This Malacoplasma penetrans (strain HF-2) (Mycoplasma penetrans) protein is Serine--tRNA ligase.